We begin with the raw amino-acid sequence, 514 residues long: Serine/threonine protein phosphatase PstP (514 aa).

At 1–302 the chain is on the cytoplasmic side; that stretch reads MARVTLVLRY…RPRWSGRRLA (302 aa). Residues 9-238 enclose the PPM-type phosphatase domain; that stretch reads RYAARSDRGL…DNVTVVVADV (230 aa). Asp38, Gly39, Asp118, Ser160, Asp191, and Asp229 together coordinate Mn(2+). A helical membrane pass occupies residues 303-323; sequence FVVALVTVLMTAGLLIGRAII. The Extracellular segment spans residues 324–514; the sequence is RSNYYVADYA…QPGIDCRAAA (191 aa). The interval 420–514 is disordered; the sequence is LLPPCPAPRA…QPGIDCRAAA (95 aa). Low complexity predominate over residues 440-480; it reads TTSETTEPNVTSSPASPSPTTSASAPTGTTPAIPTSASPAA.

The cofactor is Mn(2+).

The protein resides in the cell membrane. The catalysed reaction is O-phospho-L-seryl-[protein] + H2O = L-seryl-[protein] + phosphate. It catalyses the reaction O-phospho-L-threonyl-[protein] + H2O = L-threonyl-[protein] + phosphate. Functionally, plays an important role in regulating cell division and growth by reversible phosphorylation signaling. May play important roles in regulating cellular metabolism and signaling pathways, which could mediate the growth and development of the cell. Plays a role in establishing and maintaining infection. This chain is Serine/threonine protein phosphatase PstP (pstP), found in Mycobacterium tuberculosis (strain CDC 1551 / Oshkosh).